We begin with the raw amino-acid sequence, 381 residues long: Genome polyprotein (381 aa).

Residues 115 to 155 form a disordered region; it reads ANDTIDTGGNSKKDVKPEQGSIQPSSNKGKEKDVNAGTSGT.

The protein belongs to the potyviridae genome polyprotein family. In terms of processing, genome polyprotein of potyviruses undergoes post-translational proteolytic processing by the main proteinase NIa-pro resulting in the production of at least ten individual proteins. The P1 proteinase and the HC-pro cleave only their respective C-termini autocatalytically. 6K1 is essential for proper proteolytic separation of P3 from CI.

It localises to the virion. It catalyses the reaction RNA(n) + a ribonucleoside 5'-triphosphate = RNA(n+1) + diphosphate. In terms of biological role, an RNA-dependent RNA polymerase that plays an essential role in the virus replication. Its function is as follows. Involved in aphid transmission, cell-to-cell and systemis movement, encapsidation of the viral RNA and in the regulation of viral RNA amplification. The chain is Genome polyprotein from Capsicum annuum (Capsicum pepper).